The primary structure comprises 101 residues: Acylphosphatase (101 aa).

The Acylphosphatase-like domain occupies 15 to 101 (RMYARVYGLV…KGEFEDFETY (87 aa)). Residues Arg-30 and Asn-48 contribute to the active site.

The protein belongs to the acylphosphatase family.

The enzyme catalyses an acyl phosphate + H2O = a carboxylate + phosphate + H(+). The polypeptide is Acylphosphatase (acyP) (Saccharolobus solfataricus (strain ATCC 35092 / DSM 1617 / JCM 11322 / P2) (Sulfolobus solfataricus)).